The primary structure comprises 101 residues: Large ribosomal subunit protein uL24 (101 aa).

Belongs to the universal ribosomal protein uL24 family. As to quaternary structure, part of the 50S ribosomal subunit.

Its function is as follows. One of two assembly initiator proteins, it binds directly to the 5'-end of the 23S rRNA, where it nucleates assembly of the 50S subunit. One of the proteins that surrounds the polypeptide exit tunnel on the outside of the subunit. The chain is Large ribosomal subunit protein uL24 from Clostridioides difficile (strain 630) (Peptoclostridium difficile).